A 3996-amino-acid polypeptide reads, in one-letter code: Probable E3 ubiquitin-protein ligase HECTD4 (3996 aa).

The chain crosses the membrane as a helical span at residues 282-302 (TCIIRCILVVFQVVFKFFFSP). The span at 1494–1510 (PTASEPDTTLTKTSPKN) shows a compositional bias: polar residues. Disordered stretches follow at residues 1494 to 1524 (PTAS…ESEA) and 1616 to 1637 (PETV…SICR). Thr-2080 is subject to Phosphothreonine. Disordered stretches follow at residues 2219 to 2245 (FITS…DDIP), 2859 to 2919 (TSAT…PTVL), 3017 to 3053 (EDTK…STSS), and 3327 to 3403 (FDKS…QEVP). Residues 2232 to 2245 (ADDESDDDDDDDIP) are compositionally biased toward acidic residues. A compositionally biased stretch (low complexity) spans 2866–2887 (LSDSSSSSSSSPGQTPQSPSLL). Positions 2888–2897 (SKRKKVKMKR) are enriched in basic residues. 3 stretches are compositionally biased toward basic and acidic residues: residues 3017-3037 (EDTK…EPEK), 3327-3341 (FDKS…EQHP), and 3370-3403 (LSEK…QEVP). Residues 3627 to 3996 (SGGDPTYAFN…IHYREDPLSG (370 aa)) enclose the HECT domain. Cys-3964 functions as the Glycyl thioester intermediate in the catalytic mechanism.

Its subcellular location is the membrane. It carries out the reaction S-ubiquitinyl-[E2 ubiquitin-conjugating enzyme]-L-cysteine + [acceptor protein]-L-lysine = [E2 ubiquitin-conjugating enzyme]-L-cysteine + N(6)-ubiquitinyl-[acceptor protein]-L-lysine.. The protein operates within protein modification; protein ubiquitination. Its function is as follows. E3 ubiquitin-protein ligase which accepts ubiquitin from an E2 ubiquitin-conjugating enzyme in the form of a thioester and then directly transfers the ubiquitin to targeted substrates. In Homo sapiens (Human), this protein is Probable E3 ubiquitin-protein ligase HECTD4 (HECTD4).